Reading from the N-terminus, the 245-residue chain is tRNA pseudouridine synthase A (245 aa).

Asp-52 (nucleophile) is an active-site residue. Position 111 (Tyr-111) interacts with substrate.

It belongs to the tRNA pseudouridine synthase TruA family. As to quaternary structure, homodimer.

It catalyses the reaction uridine(38/39/40) in tRNA = pseudouridine(38/39/40) in tRNA. Formation of pseudouridine at positions 38, 39 and 40 in the anticodon stem and loop of transfer RNAs. This Wolbachia sp. subsp. Drosophila simulans (strain wRi) protein is tRNA pseudouridine synthase A.